A 239-amino-acid polypeptide reads, in one-letter code: Ubiquinone biosynthesis O-methyltransferase (239 aa).

Residues Arg44, Gly63, Asp84, and Met128 each coordinate S-adenosyl-L-methionine.

The protein belongs to the methyltransferase superfamily. UbiG/COQ3 family.

The enzyme catalyses a 3-demethylubiquinol + S-adenosyl-L-methionine = a ubiquinol + S-adenosyl-L-homocysteine + H(+). The catalysed reaction is a 3-(all-trans-polyprenyl)benzene-1,2-diol + S-adenosyl-L-methionine = a 2-methoxy-6-(all-trans-polyprenyl)phenol + S-adenosyl-L-homocysteine + H(+). It functions in the pathway cofactor biosynthesis; ubiquinone biosynthesis. Its function is as follows. O-methyltransferase that catalyzes the 2 O-methylation steps in the ubiquinone biosynthetic pathway. This is Ubiquinone biosynthesis O-methyltransferase from Xanthomonas axonopodis pv. citri (strain 306).